Here is a 63-residue protein sequence, read N- to C-terminus: DNA-directed RNA polymerase 7 kDa subunit (63 aa).

The protein belongs to the poxviridae DNA-directed RNA polymerase 7 kDa subunit family. The DNA-dependent RNA polymerase used for intermediate and late genes expression consists of eight subunits 147 kDa, 133 kDa, 35 kDa, 30 kDa, 22 kDa, 19 kDa, 18 kDa and 7 kDa totalling more than 500 kDa in mass. The same holoenzyme, with the addition of the transcription-specificity factor RAP94, is used for early gene expression.

It localises to the virion. It carries out the reaction RNA(n) + a ribonucleoside 5'-triphosphate = RNA(n+1) + diphosphate. In terms of biological role, part of the DNA-dependent RNA polymerase which catalyzes the transcription of viral DNA into RNA using the four ribonucleoside triphosphates as substrates. Responsible for the transcription of early, intermediate and late genes. DNA-dependent RNA polymerase associates with the early transcription factor (ETF) thereby allowing the early genes transcription. Late transcription, and probably also intermediate transcription, require newly synthesized RNA polymerase. In Rabbit fibroma virus (strain Kasza) (RFV), this protein is DNA-directed RNA polymerase 7 kDa subunit (RPO7).